A 192-amino-acid chain; its full sequence is Thymidine kinase (192 aa).

ATP contacts are provided by residues 9–16 (SAMNAGKS) and 87–90 (DECQ). E88 functions as the Proton acceptor in the catalytic mechanism. Positions 145, 147, 182, and 185 each coordinate Zn(2+).

Belongs to the thymidine kinase family. Homotetramer.

The protein localises to the cytoplasm. The enzyme catalyses thymidine + ATP = dTMP + ADP + H(+). The sequence is that of Thymidine kinase from Aliivibrio fischeri (strain ATCC 700601 / ES114) (Vibrio fischeri).